Consider the following 836-residue polypeptide: Protein translocase subunit SecA (836 aa).

Residues Gln-85, 103-107 (GEGKT), and Asp-492 contribute to the ATP site. Zn(2+) is bound by residues Cys-820, Cys-822, Cys-831, and Cys-832.

This sequence belongs to the SecA family. As to quaternary structure, monomer and homodimer. Part of the essential Sec protein translocation apparatus which comprises SecA, SecYEG and auxiliary proteins SecDF. Other proteins may also be involved. The cofactor is Zn(2+).

It is found in the cell membrane. It localises to the cytoplasm. It carries out the reaction ATP + H2O + cellular proteinSide 1 = ADP + phosphate + cellular proteinSide 2.. In terms of biological role, part of the Sec protein translocase complex. Interacts with the SecYEG preprotein conducting channel. Has a central role in coupling the hydrolysis of ATP to the transfer of proteins into and across the cell membrane, serving as an ATP-driven molecular motor driving the stepwise translocation of polypeptide chains across the membrane. The chain is Protein translocase subunit SecA from Clostridium botulinum (strain Alaska E43 / Type E3).